Consider the following 183-residue polypeptide: Transmembrane protein 252 (183 aa).

2 consecutive transmembrane segments (helical) span residues 8–28 (ILCALSLLTGFLMICLGGFFI) and 39–59 (LVVAYVLLPMGFVILLSGIFW).

It localises to the membrane. The chain is Transmembrane protein 252 (Tmem252) from Mus musculus (Mouse).